We begin with the raw amino-acid sequence, 395 residues long: Probable beta-1,3-galactosyltransferase 8 (395 aa).

A helical; Signal-anchor for type II membrane protein transmembrane segment spans residues 5–27; the sequence is AASGKAIIVLCLASFLAGSLFMS. N-linked (GlcNAc...) asparagine glycosylation is present at asparagine 117.

Belongs to the glycosyltransferase 31 family. Mn(2+) serves as cofactor.

It localises to the golgi apparatus membrane. Its pathway is protein modification; protein glycosylation. Its function is as follows. Beta-1,3-galactosyltransferase that transfers galactose from UDP-galactose to substrates with a terminal glycosyl residue. In Arabidopsis thaliana (Mouse-ear cress), this protein is Probable beta-1,3-galactosyltransferase 8 (B3GALT8).